The chain runs to 394 residues: Putative FNIP repeat-containing protein R636 (394 aa).

3 FNIP repeats span residues 126-167 (FNKS…FSVY), 168-207 (FDQPVVGYLPTRLTHLIFGTDFNQPIKGALPDTLEYLYFG), and 210-250 (FNQP…IFEA).

The chain is Putative FNIP repeat-containing protein R636 from Acanthamoeba polyphaga mimivirus (APMV).